Consider the following 344-residue polypeptide: UDP-3-O-acylglucosamine N-acyltransferase (344 aa).

His-236 functions as the Proton acceptor in the catalytic mechanism.

The protein belongs to the transferase hexapeptide repeat family. LpxD subfamily. In terms of assembly, homotrimer.

It carries out the reaction a UDP-3-O-[(3R)-3-hydroxyacyl]-alpha-D-glucosamine + a (3R)-hydroxyacyl-[ACP] = a UDP-2-N,3-O-bis[(3R)-3-hydroxyacyl]-alpha-D-glucosamine + holo-[ACP] + H(+). It participates in bacterial outer membrane biogenesis; LPS lipid A biosynthesis. In terms of biological role, catalyzes the N-acylation of UDP-3-O-acylglucosamine using 3-hydroxyacyl-ACP as the acyl donor. Is involved in the biosynthesis of lipid A, a phosphorylated glycolipid that anchors the lipopolysaccharide to the outer membrane of the cell. This is UDP-3-O-acylglucosamine N-acyltransferase from Nitratidesulfovibrio vulgaris (strain ATCC 29579 / DSM 644 / CCUG 34227 / NCIMB 8303 / VKM B-1760 / Hildenborough) (Desulfovibrio vulgaris).